Here is a 442-residue protein sequence, read N- to C-terminus: Putative ammonium transporter sll1017 (442 aa).

A run of 13 helical transmembrane segments spans residues 5–25, 44–64, 81–101, 104–124, 133–153, 155–175, 193–213, 240–260, 269–289, 299–319, 325–345, 354–374, and 386–406; these read NFPL…VGVA, LFLL…AMLE, TFDV…LMYG, PVLG…LDNV, WLFQ…AVMG, MYFK…YPIS, FAGS…AVVV, GVFI…LAFV, MLIA…ALAF, PNLL…TAGC, WSAI…TKLL, VGAW…VGIF, and IVGS…LFYV.

It belongs to the ammonia transporter channel (TC 1.A.11.2) family.

It is found in the cell membrane. The protein is Putative ammonium transporter sll1017 of Synechocystis sp. (strain ATCC 27184 / PCC 6803 / Kazusa).